The primary structure comprises 386 residues: Succinate--CoA ligase [ADP-forming] subunit beta (386 aa).

The region spanning 9 to 244 (KAVLRSYGVS…LEEEDSKEIE (236 aa)) is the ATP-grasp domain. ATP is bound by residues Lys-46, 53 to 55 (GRG), Glu-99, Cys-102, and Glu-107. Mg(2+)-binding residues include Asn-199 and Asp-213. Substrate-binding positions include Asn-264 and 321–323 (GIM).

This sequence belongs to the succinate/malate CoA ligase beta subunit family. As to quaternary structure, heterotetramer of two alpha and two beta subunits. Mg(2+) serves as cofactor.

The catalysed reaction is succinate + ATP + CoA = succinyl-CoA + ADP + phosphate. It carries out the reaction GTP + succinate + CoA = succinyl-CoA + GDP + phosphate. It functions in the pathway carbohydrate metabolism; tricarboxylic acid cycle; succinate from succinyl-CoA (ligase route): step 1/1. Succinyl-CoA synthetase functions in the citric acid cycle (TCA), coupling the hydrolysis of succinyl-CoA to the synthesis of either ATP or GTP and thus represents the only step of substrate-level phosphorylation in the TCA. The beta subunit provides nucleotide specificity of the enzyme and binds the substrate succinate, while the binding sites for coenzyme A and phosphate are found in the alpha subunit. The polypeptide is Succinate--CoA ligase [ADP-forming] subunit beta (Bacillus mycoides (strain KBAB4) (Bacillus weihenstephanensis)).